The primary structure comprises 115 residues: UPF0102 protein NMCC_2054 (115 aa).

The protein belongs to the UPF0102 family.

In Neisseria meningitidis serogroup C (strain 053442), this protein is UPF0102 protein NMCC_2054.